Reading from the N-terminus, the 233-residue chain is Short chain dehydrogenase trt9 (233 aa).

Positions 33, 95, 127, 131, and 160 each coordinate NADP(+). Tyrosine 127 acts as the Proton donor in catalysis. The Lowers pKa of active site Tyr role is filled by lysine 131.

Belongs to the short-chain dehydrogenases/reductases (SDR) family.

It participates in secondary metabolite biosynthesis; terpenoid biosynthesis. Short chain dehydrogenase; part of the gene cluster that mediates the biosynthesis of terretonin, a fungal meroterpenoid that acts as a mycotoxin. The first step of the pathway is the synthesis of 3,5-dimethylorsellinic acid (DMOA) by the polyketide synthase trt4. DMOA is then prenylated into farnesyl-DMOA by the polyprenyl transferase trt2. Methylation by the methyltransferase trt5 then leads to farnesyl-DMOA methyl ester which is further subject to epoxidation by the FAD-dependent monooxygenase trt8 to yield epoxyfarnesyl-DMOA methyl ester. Cyclization of epoxyfarnesyl-DMOA methyl ester by the terpene cyclase trt1 leads to a tetracycle intermediate which is in turn converted to preterretonin. Dehydrogenase trt9 comes next to transform preterretonin to preterrenoid. The FAD-dependent monooxygenase trt3 is then required for the C-hydroxylation at C16 of preterrenoid to yield terrenoid. The cytochrome P450 trt6 catalyzes three successive oxidations to transform terrenoid into an unstable intermediate, which then undergoes the D-ring expansion and unusual rearrangement of the methoxy group to afford the core skeleton of terretonin. Trt14 catalyzes the D-ring expansion of terretonin involving intramolecular methoxy rearrangement as well as the hydrolysis of the expanded D-ring and the methyl ester moiety. Finally, the nonheme iron-dependent dioxygenase trt7 accomplishes the last two oxidation reactions steps to complete the biosynthesis of terretonin. Terretonin C is produced via spontaneous decarboxylation of the terretonin precursor. Another shunt product of the terretonin biosynthesis is dihydrofarnesyl-DMOA, derived from epoxyfarnesyl-DMOA through hydrolysis of the epoxide. This chain is Short chain dehydrogenase trt9, found in Aspergillus terreus (strain NIH 2624 / FGSC A1156).